The chain runs to 260 residues: Proteasome subunit alpha 1 (260 aa).

The disordered stretch occupies residues 237–260 (AEADLLDTGEDADDEAEDEDATEE). Acidic residues predominate over residues 240-260 (DLLDTGEDADDEAEDEDATEE).

This sequence belongs to the peptidase T1A family. As to quaternary structure, the 20S proteasome core is composed of 14 alpha and 14 beta subunits that assemble into four stacked heptameric rings, resulting in a barrel-shaped structure. The two inner rings, each composed of seven catalytic beta subunits, are sandwiched by two outer rings, each composed of seven alpha subunits. The catalytic chamber with the active sites is on the inside of the barrel. Has a gated structure, the ends of the cylinder being occluded by the N-termini of the alpha-subunits. Is capped at one or both ends by the proteasome regulatory ATPase, PAN.

It localises to the cytoplasm. Its activity is regulated as follows. The formation of the proteasomal ATPase PAN-20S proteasome complex, via the docking of the C-termini of PAN into the intersubunit pockets in the alpha-rings, triggers opening of the gate for substrate entry. Interconversion between the open-gate and close-gate conformations leads to a dynamic regulation of the 20S proteasome proteolysis activity. Its function is as follows. Component of the proteasome core, a large protease complex with broad specificity involved in protein degradation. In Haloarcula marismortui (strain ATCC 43049 / DSM 3752 / JCM 8966 / VKM B-1809) (Halobacterium marismortui), this protein is Proteasome subunit alpha 1.